The following is a 176-amino-acid chain: Small ribosomal subunit protein uS5 (176 aa).

In terms of domain architecture, S5 DRBM spans 11–74 (LSEVLVDVNR…QAAKKRMMKV (64 aa)).

This sequence belongs to the universal ribosomal protein uS5 family. Part of the 30S ribosomal subunit. Contacts proteins S4 and S8.

In terms of biological role, with S4 and S12 plays an important role in translational accuracy. Located at the back of the 30S subunit body where it stabilizes the conformation of the head with respect to the body. The protein is Small ribosomal subunit protein uS5 of Rickettsia rickettsii (strain Iowa).